Reading from the N-terminus, the 473-residue chain is Ribulose bisphosphate carboxylase large chain 2 (473 aa).

Substrate-binding residues include N116 and T166. K168 functions as the Proton acceptor in the catalytic mechanism. Residue K170 coordinates substrate. Residues K194, D196, and E197 each coordinate Mg(2+). The residue at position 194 (K194) is an N6-carboxylysine. H287 serves as the catalytic Proton acceptor. Residues R288, H320, and S372 each coordinate substrate.

This sequence belongs to the RuBisCO large chain family. Type I subfamily. Heterohexadecamer of 8 large chains and 8 small chains. It depends on Mg(2+) as a cofactor.

The enzyme catalyses 2 (2R)-3-phosphoglycerate + 2 H(+) = D-ribulose 1,5-bisphosphate + CO2 + H2O. It carries out the reaction D-ribulose 1,5-bisphosphate + O2 = 2-phosphoglycolate + (2R)-3-phosphoglycerate + 2 H(+). RuBisCO catalyzes two reactions: the carboxylation of D-ribulose 1,5-bisphosphate, the primary event in carbon dioxide fixation, as well as the oxidative fragmentation of the pentose substrate. Both reactions occur simultaneously and in competition at the same active site. In Acidithiobacillus ferrooxidans (Thiobacillus ferrooxidans), this protein is Ribulose bisphosphate carboxylase large chain 2.